The following is a 342-amino-acid chain: Anthranilate phosphoribosyltransferase (342 aa).

5-phospho-alpha-D-ribose 1-diphosphate contacts are provided by residues Gly90, 93–94, Thr98, 100–103, 118–126, and Ala130; these read GD, NIST, and KHGNRSVSS. An anthranilate-binding site is contributed by Gly90. Ser102 serves as a coordination point for Mg(2+). An anthranilate-binding site is contributed by Asn121. Residue Arg176 coordinates anthranilate. Asp234 and Glu235 together coordinate Mg(2+).

Belongs to the anthranilate phosphoribosyltransferase family. As to quaternary structure, homodimer. The cofactor is Mg(2+).

The catalysed reaction is N-(5-phospho-beta-D-ribosyl)anthranilate + diphosphate = 5-phospho-alpha-D-ribose 1-diphosphate + anthranilate. Its pathway is amino-acid biosynthesis; L-tryptophan biosynthesis; L-tryptophan from chorismate: step 2/5. Catalyzes the transfer of the phosphoribosyl group of 5-phosphorylribose-1-pyrophosphate (PRPP) to anthranilate to yield N-(5'-phosphoribosyl)-anthranilate (PRA). The chain is Anthranilate phosphoribosyltransferase from Mannheimia succiniciproducens (strain KCTC 0769BP / MBEL55E).